Here is a 273-residue protein sequence, read N- to C-terminus: Cell division protein ZipA (273 aa).

Position 1 (M1) is a topological domain, periplasmic. The chain crosses the membrane as a helical span at residues 2-22; that stretch reads DIGLREWLIVIGIIVIAGILF. The Cytoplasmic portion of the chain corresponds to 23 to 273; the sequence is DGWRRMRGGK…ERRQMTIKQR (251 aa). The interval 61-127 is disordered; that stretch reads VVNREHEPSL…DLQERPQKEQ (67 aa).

The protein belongs to the ZipA family. As to quaternary structure, interacts with FtsZ via their C-terminal domains.

The protein resides in the cell inner membrane. Essential cell division protein that stabilizes the FtsZ protofilaments by cross-linking them and that serves as a cytoplasmic membrane anchor for the Z ring. Also required for the recruitment to the septal ring of downstream cell division proteins. This Stutzerimonas stutzeri (strain A1501) (Pseudomonas stutzeri) protein is Cell division protein ZipA.